Reading from the N-terminus, the 274-residue chain is NAD-dependent protein deacetylase (274 aa).

In terms of domain architecture, Deacetylase sirtuin-type spans 1 to 274 (MDSRMSDLQA…CDEVLAEVVP (274 aa)). NAD(+) is bound by residues 26-46 (GAGC…GQWK) and 104-107 (QNVD). The Proton acceptor role is filled by His122. 4 residues coordinate Zn(2+): Cys130, Cys133, Cys181, and Cys184. NAD(+) is bound by residues 221-223 (GSS), 247-249 (NLG), and Cys265.

Belongs to the sirtuin family. Class II subfamily. Zn(2+) is required as a cofactor.

It localises to the cytoplasm. It catalyses the reaction N(6)-acetyl-L-lysyl-[protein] + NAD(+) + H2O = 2''-O-acetyl-ADP-D-ribose + nicotinamide + L-lysyl-[protein]. NAD-dependent protein deacetylase which modulates the activities of several enzymes which are inactive in their acetylated form. The chain is NAD-dependent protein deacetylase from Bordetella pertussis (strain Tohama I / ATCC BAA-589 / NCTC 13251).